The following is a 209-amino-acid chain: High mobility group protein B2 (209 aa).

Lys3 bears the N6-acetyllysine mark. The HMG box 1 DNA-binding region spans 9–79 (PRGKMSSYAF…RYDREMKNYV (71 aa)). Position 23 is a cysteine sulfonic acid (-SO3H); alternate (Cys23). An intrachain disulfide couples Cys23 to Cys45. Lys30 carries the post-translational modification N6-acetyllysine. Position 35 is a phosphoserine (Ser35). N6-acetyllysine is present on Lys43. Cys45 bears the Cysteine sulfonic acid (-SO3H); alternate mark. Residues 52-76 (MSAKEKSKFEDMAKSDKARYDREMK) are compositionally biased toward basic and acidic residues. Disordered stretches follow at residues 52-150 (MSAK…KAAK) and 162-209 (YRAK…EDEE). At Lys90 the chain carries N6-acetyllysine. The segment at residues 95 to 163 (PKRPPSAFFL…KYEKDIAAYR (69 aa)) is a DNA-binding region (HMG box 2). A Phosphoserine modification is found at Ser100. Cys106 carries the post-translational modification Cysteine sulfonic acid (-SO3H). Basic and acidic residues-rich tracts occupy residues 107–117 (SEHRPKIKSEH), 137–150 (SAKDKQPYEQKAAK), and 162–172 (YRAKGKSEAGK). 2 positions are modified to N6-acetyllysine: Lys114 and Lys141. The required for chemotactic activity stretch occupies residues 165-180 (KGKSEAGKKGPGRPTG). Over residues 187–209 (PEDEEEEEEEEDEDEEEEDEDEE) the composition is skewed to acidic residues.

This sequence belongs to the HMGB family. Interacts with POU2F2, POU2F1 and POU3F1. Component of the RAG complex composed of core components RAG1 and RAG2, and associated component HMGB1 or HMGB2. Component of the SET complex, composed of at least ANP32A, APEX1, HMGB2, NME1, SET and TREX1. Directly interacts with SET. Interacts with LEF1. Reduction/oxidation of cysteine residues Cys-23, Cys-45 and Cys-106 and a possible intramolecular disulfide bond involving Cys-23 and Cys-45 give rise to different redox forms with specific functional activities in various cellular compartments: 1- fully reduced HMGB2 (HMGB2C23hC45hC106h), 2- disulfide HMGB2 (HMGB2C23-C45C106h) and 3- sulfonyl HMGB2 (HMGB2C23soC45soC106so).

The protein localises to the nucleus. Its subcellular location is the chromosome. The protein resides in the cytoplasm. It is found in the secreted. In terms of biological role, multifunctional protein with various roles in different cellular compartments. May act in a redox sensitive manner. In the nucleus is an abundant chromatin-associated non-histone protein involved in transcription, chromatin remodeling and V(D)J recombination and probably other processes. Binds DNA with a preference to non-canonical DNA structures such as single-stranded DNA. Can bent DNA and enhance DNA flexibility by looping thus providing a mechanism to promote activities on various gene promoters by enhancing transcription factor binding and/or bringing distant regulatory sequences into close proximity. Involved in V(D)J recombination by acting as a cofactor of the RAG complex: acts by stimulating cleavage and RAG protein binding at the 23 bp spacer of conserved recombination signal sequences (RSS). Proposed to be involved in the innate immune response to nucleic acids by acting as a cytoplasmic promiscuous immunogenic DNA/RNA sensor which cooperates with subsequent discriminative sensing by specific pattern recognition receptors. In the extracellular compartment acts as a chemokine. Promotes proliferation and migration of endothelial cells implicating AGER/RAGE. Has antimicrobial activity in gastrointestinal epithelial tissues. Involved in inflammatory response to antigenic stimulus coupled with pro-inflammatory activity. May play a role in germ cell differentiation. Involved in modulation of neurogenesis probably by regulation of neural stem proliferation. Involved in articular cartilage surface maintenance implicating LEF1 and the Wnt/beta-catenin pathway. The sequence is that of High mobility group protein B2 (HMGB2) from Bos taurus (Bovine).